Reading from the N-terminus, the 316-residue chain is Ribosomal protein L11 methyltransferase (316 aa).

Thr-157, Gly-178, Asp-200, and Asn-243 together coordinate S-adenosyl-L-methionine.

Belongs to the methyltransferase superfamily. PrmA family.

The protein resides in the cytoplasm. It catalyses the reaction L-lysyl-[protein] + 3 S-adenosyl-L-methionine = N(6),N(6),N(6)-trimethyl-L-lysyl-[protein] + 3 S-adenosyl-L-homocysteine + 3 H(+). In terms of biological role, methylates ribosomal protein L11. The polypeptide is Ribosomal protein L11 methyltransferase (Streptococcus pneumoniae (strain Hungary19A-6)).